The chain runs to 163 residues: Urease accessory protein UreE (163 aa).

Positions 130–163 (PFEPEPGAYGGGHGHTHSHDHSHQHDPAGHAHEH) are disordered. Over residues 146 to 163 (HSHDHSHQHDPAGHAHEH) the composition is skewed to basic and acidic residues.

Belongs to the UreE family.

Its subcellular location is the cytoplasm. Functionally, involved in urease metallocenter assembly. Binds nickel. Probably functions as a nickel donor during metallocenter assembly. In Alkalilimnicola ehrlichii (strain ATCC BAA-1101 / DSM 17681 / MLHE-1), this protein is Urease accessory protein UreE.